The chain runs to 232 residues: NAD(P)H-quinone oxidoreductase subunit K 1 (232 aa).

[4Fe-4S] cluster-binding residues include cysteine 49, cysteine 50, cysteine 114, and cysteine 145.

This sequence belongs to the complex I 20 kDa subunit family. NDH-1 can be composed of about 15 different subunits; different subcomplexes with different compositions have been identified which probably have different functions. Requires [4Fe-4S] cluster as cofactor.

Its subcellular location is the cell inner membrane. The catalysed reaction is a plastoquinone + NADH + (n+1) H(+)(in) = a plastoquinol + NAD(+) + n H(+)(out). The enzyme catalyses a plastoquinone + NADPH + (n+1) H(+)(in) = a plastoquinol + NADP(+) + n H(+)(out). In terms of biological role, NDH-1 shuttles electrons from an unknown electron donor, via FMN and iron-sulfur (Fe-S) centers, to quinones in the respiratory and/or the photosynthetic chain. The immediate electron acceptor for the enzyme in this species is believed to be plastoquinone. Couples the redox reaction to proton translocation, and thus conserves the redox energy in a proton gradient. Cyanobacterial NDH-1 also plays a role in inorganic carbon-concentration. The chain is NAD(P)H-quinone oxidoreductase subunit K 1 from Gloeobacter violaceus (strain ATCC 29082 / PCC 7421).